The following is a 120-amino-acid chain: Putative monooxygenase GME11364 (120 aa).

One can recognise an ABM domain in the interval 9 to 99 (VSVHIRLTVD…ILLKPHEVEL (91 aa)).

This sequence belongs to the LsrG family.

The protein operates within secondary metabolite biosynthesis. Putative monooxygenase; part of the gene cluster that mediates the biosynthesis of dibenzodioxocinones such as pestalotiollide B, a novel class of inhibitors against cholesterol ester transfer protein (CEPT). The biosynthesis initiates from condensation of acetate and malonate units catalyzed by the non-reducing PKS pks8/GME11356. Pks8/GME11356 lacks a thioesterase (TE) domain, which is important to the cyclizing of the third ring of atrochrysone carboxylic acid, and the esterase GME11355 might play the role of TE and catalyzes the cyclization reaction of the C ring. The lactamase-like protein GME11357 (or other beta-lactamases in Pestalotiopsis microspora) probably hydrolyzes the thioester bond between the ACP of pks8/GME11356 and the intermediate to release atrochrysone carboxylic acid, which is spontaneously dehydrates to form endocrocin anthrone. Endocrocin anthrone is further converted to emodin via the endocrocin intermediate. Emodin is then oxidized by several enzymes such as the Baeyer-Villiger oxidase GME11358, the oxidoreductase GME11367, the short chain dehydrogenase/reductase GME11373, as well as by other oxidoreductases from the cluster, to modify the A and C rings and open the B ring, and finally yield monodictyphenone. The prenyltransferase GME11375 may catalyze the addition reaction between the C5 side chains and the carbon bone of dibenzodioxocinones. The remaining biochemical reactions to the final product dibenzodioxocinones should be methylation catalyzed by methyltransferase GME11366 and reduction and lactonization reaction catalyzed by a series of oxidordeuctases. The chain is Putative monooxygenase GME11364 from Pestalotiopsis microspora.